The sequence spans 202 residues: Small ribosomal subunit protein uS4c (202 aa).

The region spanning 90–153 (MRLDNVIFRL…KSETIISKNI (64 aa)) is the S4 RNA-binding domain.

It belongs to the universal ribosomal protein uS4 family. In terms of assembly, part of the 30S ribosomal subunit. Contacts protein S5. The interaction surface between S4 and S5 is involved in control of translational fidelity.

It localises to the plastid. The protein resides in the chloroplast. Its function is as follows. One of the primary rRNA binding proteins, it binds directly to 16S rRNA where it nucleates assembly of the body of the 30S subunit. In terms of biological role, with S5 and S12 plays an important role in translational accuracy. This is Small ribosomal subunit protein uS4c (rps4) from Sphaerocarpos donnelli (Liverwort).